The primary structure comprises 503 residues: Type II secretion system ATPase E (503 aa).

4 residues coordinate Zn(2+): cysteine 397, cysteine 400, cysteine 430, and cysteine 433.

It belongs to the GSP E family. In terms of assembly, forms homooligomers; most probably hexamers. Interacts with EpsL/GspL. Zn(2+) serves as cofactor.

It localises to the cell inner membrane. The catalysed reaction is ATP + H2O + cellular proteinSide 1 = ADP + phosphate + cellular proteinSide 2.. ATPase component of the type II secretion system required for the energy-dependent secretion of extracellular factors such as proteases and toxins from the periplasm. Acts as a molecular motor to provide the energy that is required for assembly of the pseudopilus and the extrusion of substrates generated in the cytoplasm. This Vibrio cholerae serotype O1 (strain ATCC 39315 / El Tor Inaba N16961) protein is Type II secretion system ATPase E (epsE).